We begin with the raw amino-acid sequence, 162 residues long: MSEHPVATLQEDIAPRLPLSSLTLFEAKKKKNLSFEAIAQAVGRNEVAIAALFYGQAMASPEDIKALSKVLDIPVEVLESQLSGFPDRGRSLEMPPKDPLVYRLYEIVQNYGPAYKAILNEKFGDGIMSAISFSTKVEKETDEKGEWAKITLRGKWLPYSRF.

Catalysis depends on residues R103, E106, and S129.

The protein belongs to the cyanase family.

The catalysed reaction is cyanate + hydrogencarbonate + 3 H(+) = NH4(+) + 2 CO2. Catalyzes the reaction of cyanate with bicarbonate to produce ammonia and carbon dioxide. This is Cyanate hydratase from Phaeosphaeria nodorum (strain SN15 / ATCC MYA-4574 / FGSC 10173) (Glume blotch fungus).